Consider the following 674-residue polypeptide: Probable L-type lectin-domain containing receptor kinase II.1 (674 aa).

The first 24 residues, 1 to 24 (MAGVLGSVVFWLIIGIHVTFLVFA), serve as a signal peptide directing secretion. Topologically, residues 25 to 301 (QEGDHFVYYD…PSPKRFPLKE (277 aa)) are extracellular. Residues 28–274 (DHFVYYDFRN…NQYILGWSFK (247 aa)) are legume-lectin like. Residues Asn57, Asn117, Asn133, Asn185, Asn210, and Asn242 are each glycosylated (N-linked (GlcNAc...) asparagine). The helical transmembrane segment at 302–322 (VLGATISTIAFLTLGGIVYLY) threads the bilayer. At 323–674 (KKKKYAEVLE…EDVTVLFGGR (352 aa)) the chain is on the cytoplasmic side. In terms of domain architecture, Protein kinase spans 355-633 (FRENQLLGAG…LEGNVSVPAI (279 aa)). ATP-binding positions include 361–369 (LGAGGFGKV) and Lys383. The active-site Proton acceptor is the Asp480.

This sequence in the C-terminal section; belongs to the protein kinase superfamily. Ser/Thr protein kinase family. It in the N-terminal section; belongs to the leguminous lectin family.

The protein resides in the cell membrane. It catalyses the reaction L-seryl-[protein] + ATP = O-phospho-L-seryl-[protein] + ADP + H(+). It carries out the reaction L-threonyl-[protein] + ATP = O-phospho-L-threonyl-[protein] + ADP + H(+). This is Probable L-type lectin-domain containing receptor kinase II.1 (LECRK21) from Arabidopsis thaliana (Mouse-ear cress).